The sequence spans 218 residues: Cytidylate kinase (218 aa).

21–29 (GPAASGKGT) is a binding site for ATP.

This sequence belongs to the cytidylate kinase family. Type 1 subfamily.

The protein localises to the cytoplasm. The enzyme catalyses CMP + ATP = CDP + ADP. The catalysed reaction is dCMP + ATP = dCDP + ADP. This is Cytidylate kinase from Rickettsia canadensis (strain McKiel).